The sequence spans 397 residues: Argininosuccinate synthase (397 aa).

9–17 (AYSGGLDTS) serves as a coordination point for ATP. An L-citrulline-binding site is contributed by Tyr-87. Gly-117 lines the ATP pocket. Residues Thr-119, Asn-123, and Asp-124 each contribute to the L-aspartate site. Asn-123 provides a ligand contact to L-citrulline. Residues Arg-127, Ser-175, Ser-184, Glu-260, and Tyr-272 each contribute to the L-citrulline site.

The protein belongs to the argininosuccinate synthase family. Type 1 subfamily. Homotetramer.

The protein resides in the cytoplasm. It carries out the reaction L-citrulline + L-aspartate + ATP = 2-(N(omega)-L-arginino)succinate + AMP + diphosphate + H(+). The protein operates within amino-acid biosynthesis; L-arginine biosynthesis; L-arginine from L-ornithine and carbamoyl phosphate: step 2/3. The sequence is that of Argininosuccinate synthase from Methanococcus maripaludis (strain DSM 14266 / JCM 13030 / NBRC 101832 / S2 / LL).